The chain runs to 453 residues: MNIVILAAGTGKRMRSALPKVLHPLAGRPLLAHVIDTARTLNPTRLVVVVGHGADQVRTAVAASDVQFALQEQQLGTGHAVQQALPLLDPSAPTLVLYGDVPLTKASTLKRLTDAAGHDGYGVLTVTLDDPTGYGRIVRDAQGKVERIVEQKDATAEQQKIAEINTGIVVMPTKRLDGWLSSLKNENAQGEFYLTDVVELAIEAGIEVVTAQPDEEWETLGVNSKQQLAELERIHQRNVADDLLVAGVTIADPARIDVRGTLECGRDVSIDVNCVFEGKVTLGDNVSIGPNCVIRNATIGAGTRIDAYTHIEGAQVGAQAVLGPYARLRPGATLSDETHIGNFVEVKNAVLGHGSKANHLSYIGDSDVGARVNIGAGTITCNYDGANKFRTIIEDDVFVGSDTQLVAPVRVGRGVTIAAGTTVWKDVEEGLLVLNEKTQIGKTGYVRPTKKKS.

The interval 1-225 (MNIVILAAGT…EWETLGVNSK (225 aa)) is pyrophosphorylase. UDP-N-acetyl-alpha-D-glucosamine-binding positions include 6–9 (LAAG), lysine 20, glutamine 71, 76–77 (GT), 98–100 (YGD), glycine 135, glutamate 150, asparagine 165, and asparagine 223. Aspartate 100 serves as a coordination point for Mg(2+). Asparagine 223 is a Mg(2+) binding site. A linker region spans residues 226 to 246 (QQLAELERIHQRNVADDLLVA). Residues 247-453 (GVTIADPARI…GYVRPTKKKS (207 aa)) are N-acetyltransferase. 2 residues coordinate UDP-N-acetyl-alpha-D-glucosamine: arginine 329 and lysine 347. Histidine 359 functions as the Proton acceptor in the catalytic mechanism. Positions 362 and 373 each coordinate UDP-N-acetyl-alpha-D-glucosamine. Residues alanine 376, 382–383 (NY), serine 401, and alanine 419 contribute to the acetyl-CoA site.

In the N-terminal section; belongs to the N-acetylglucosamine-1-phosphate uridyltransferase family. It in the C-terminal section; belongs to the transferase hexapeptide repeat family. As to quaternary structure, homotrimer. The cofactor is Mg(2+).

The protein resides in the cytoplasm. The catalysed reaction is alpha-D-glucosamine 1-phosphate + acetyl-CoA = N-acetyl-alpha-D-glucosamine 1-phosphate + CoA + H(+). It catalyses the reaction N-acetyl-alpha-D-glucosamine 1-phosphate + UTP + H(+) = UDP-N-acetyl-alpha-D-glucosamine + diphosphate. The protein operates within nucleotide-sugar biosynthesis; UDP-N-acetyl-alpha-D-glucosamine biosynthesis; N-acetyl-alpha-D-glucosamine 1-phosphate from alpha-D-glucosamine 6-phosphate (route II): step 2/2. It functions in the pathway nucleotide-sugar biosynthesis; UDP-N-acetyl-alpha-D-glucosamine biosynthesis; UDP-N-acetyl-alpha-D-glucosamine from N-acetyl-alpha-D-glucosamine 1-phosphate: step 1/1. Its pathway is bacterial outer membrane biogenesis; LPS lipid A biosynthesis. Functionally, catalyzes the last two sequential reactions in the de novo biosynthetic pathway for UDP-N-acetylglucosamine (UDP-GlcNAc). The C-terminal domain catalyzes the transfer of acetyl group from acetyl coenzyme A to glucosamine-1-phosphate (GlcN-1-P) to produce N-acetylglucosamine-1-phosphate (GlcNAc-1-P), which is converted into UDP-GlcNAc by the transfer of uridine 5-monophosphate (from uridine 5-triphosphate), a reaction catalyzed by the N-terminal domain. This is Bifunctional protein GlmU from Paraburkholderia phymatum (strain DSM 17167 / CIP 108236 / LMG 21445 / STM815) (Burkholderia phymatum).